Reading from the N-terminus, the 414-residue chain is Esterase FrsA (414 aa).

It belongs to the FrsA family.

It carries out the reaction a carboxylic ester + H2O = an alcohol + a carboxylate + H(+). Catalyzes the hydrolysis of esters. This is Esterase FrsA from Shigella boydii serotype 18 (strain CDC 3083-94 / BS512).